Consider the following 300-residue polypeptide: Glycine betaine/carnitine transport binding protein GbuC (300 aa).

The N-terminal stretch at 1 to 20 (MLKKLITTAVLAMLIFTLAA) is a signal peptide. Cys-21 is lipidated: N-palmitoyl cysteine. Cys-21 carries S-diacylglycerol cysteine lipidation.

In terms of assembly, the complex is composed of two ATP-binding proteins (GbuA), two transmembrane proteins (GbuB) and a solute-binding protein (GbuC).

It localises to the cell membrane. With respect to regulation, the complex is activated by an osmotic gradient or by low temperature. Its function is as follows. Part of the ABC transporter complex GbuABC involved in glycine betaine uptake. Involved, with BetL and OpuC, in osmoprotection and cryoprotection of Listeria. Can also uptake carnitine when carnitine is abundant in the growth medium. The chain is Glycine betaine/carnitine transport binding protein GbuC (gbuC) from Listeria monocytogenes serotype 1/2a (strain 10403S).